Reading from the N-terminus, the 178-residue chain is ATP synthase subunit delta (178 aa).

This sequence belongs to the ATPase delta chain family. As to quaternary structure, F-type ATPases have 2 components, F(1) - the catalytic core - and F(0) - the membrane proton channel. F(1) has five subunits: alpha(3), beta(3), gamma(1), delta(1), epsilon(1). F(0) has three main subunits: a(1), b(2) and c(10-14). The alpha and beta chains form an alternating ring which encloses part of the gamma chain. F(1) is attached to F(0) by a central stalk formed by the gamma and epsilon chains, while a peripheral stalk is formed by the delta and b chains.

Its subcellular location is the cell inner membrane. In terms of biological role, f(1)F(0) ATP synthase produces ATP from ADP in the presence of a proton or sodium gradient. F-type ATPases consist of two structural domains, F(1) containing the extramembraneous catalytic core and F(0) containing the membrane proton channel, linked together by a central stalk and a peripheral stalk. During catalysis, ATP synthesis in the catalytic domain of F(1) is coupled via a rotary mechanism of the central stalk subunits to proton translocation. Its function is as follows. This protein is part of the stalk that links CF(0) to CF(1). It either transmits conformational changes from CF(0) to CF(1) or is implicated in proton conduction. The sequence is that of ATP synthase subunit delta from Marinobacter nauticus (strain ATCC 700491 / DSM 11845 / VT8) (Marinobacter aquaeolei).